A 178-amino-acid polypeptide reads, in one-letter code: PRA1 family protein 2 (178 aa).

The Cytoplasmic portion of the chain corresponds to 1–41; it reads MSEVRLPPLRALDDFVLGSARLAAPDPCDPQRWCHRVINNL. A helical membrane pass occupies residues 42-62; the sequence is LYYQTNYLLCFGIGLALAGYV. Over 63-64 the chain is Extracellular; that stretch reads RP. Residues 65–85 form a helical membrane-spanning segment; sequence LHTLLSALVVAVALGMLVWAA. The Cytoplasmic portion of the chain corresponds to 86–96; that stretch reads ETRAAVRRCRR. The helical transmembrane segment at 97–119 threads the bilayer; the sequence is SHPAACLAAVLAVGLLVLWVVGG. Residues 120-122 are Extracellular-facing; it reads ACT. A helical transmembrane segment spans residues 123 to 140; the sequence is FLLSIAGPVLLILVHASL. Over 141–178 the chain is Cytoplasmic; the sequence is RLRNLKNKIENKIESIGLKRTPMGLLLEALGQEQEAGS.

It belongs to the PRA1 family. As to quaternary structure, interacts with CCR5 and GDE1.

Its subcellular location is the endosome membrane. Functionally, may be involved in ER/Golgi transport and vesicular traffic. Plays a proapoptotic role in cerulenin-induced neuroblastoma apoptosis. In Macaca fascicularis (Crab-eating macaque), this protein is PRA1 family protein 2 (PRAF2).